A 259-amino-acid chain; its full sequence is uncharacterized protein (259 aa).

This sequence belongs to the BtpA family.

This is an uncharacterized protein from Pyrococcus abyssi (strain GE5 / Orsay).